The primary structure comprises 513 residues: Glucose-1-phosphate adenylyltransferase small subunit, chloroplastic/amyloplastic (513 aa).

The N-terminal 64 residues, 1-64 (MAMAAAASPS…RRPFFFSPRA (64 aa)), are a transit peptide targeting the chloroplast.

Belongs to the bacterial/plant glucose-1-phosphate adenylyltransferase family. As to quaternary structure, heterotetramer. In terms of tissue distribution, leaves and starchy endosperm.

It localises to the plastid. The protein localises to the chloroplast. Its subcellular location is the amyloplast. It carries out the reaction alpha-D-glucose 1-phosphate + ATP + H(+) = ADP-alpha-D-glucose + diphosphate. The protein operates within glycan biosynthesis; starch biosynthesis. Its activity is regulated as follows. Activated by 3'phosphoglycerate, inhibited by orthophosphate. Allosteric regulation. In terms of biological role, this protein plays a role in synthesis of starch. It catalyzes the synthesis of the activated glycosyl donor, ADP-glucose from Glc-1-P and ATP. This is Glucose-1-phosphate adenylyltransferase small subunit, chloroplastic/amyloplastic from Hordeum vulgare (Barley).